A 263-amino-acid chain; its full sequence is HTH-type transcriptional repressor NanR (263 aa).

Residues methionine 1–leucine 22 are disordered. An HTH gntR-type domain is found at lysine 30 to proline 98. The H-T-H motif DNA-binding region spans glutamate 58–alanine 77.

It belongs to the NanR family.

Its function is as follows. Transcriptional repressor that controls expression of the genes required for the catabolism of sialic acids. The sequence is that of HTH-type transcriptional repressor NanR from Shigella dysenteriae serotype 1 (strain Sd197).